The following is a 300-amino-acid chain: Cation-efflux pump FieF (300 aa).

A helical transmembrane segment spans residues 24-44 (LLIKILAWWYTGSVSILAALV). Zn(2+) is bound by residues aspartate 45 and aspartate 49. The next 2 helical transmembrane spans lie at 82-102 (AALAQSMFISGSALFLFLTSI) and 114-134 (PGVGIGVTVIALICTIILVTF). Residues histidine 153 and aspartate 157 each coordinate Zn(2+). 2 helical membrane passes run 156-176 (SDVMMNGAILIALGLSWYGWH) and 178-198 (ADALFALGIGIYILYSALRMG).

Belongs to the cation diffusion facilitator (CDF) transporter (TC 2.A.4) family. FieF subfamily. In terms of assembly, homodimer.

The protein localises to the cell inner membrane. The enzyme catalyses Zn(2+)(in) + H(+)(out) = Zn(2+)(out) + H(+)(in). It catalyses the reaction Cd(2+)(in) + H(+)(out) = Cd(2+)(out) + H(+)(in). It carries out the reaction Fe(2+)(in) + H(+)(out) = Fe(2+)(out) + H(+)(in). Divalent metal cation transporter which exports Zn(2+), Cd(2+) and possibly Fe(2+). May be involved in zinc and iron detoxification by efflux. This is Cation-efflux pump FieF from Salmonella agona (strain SL483).